The sequence spans 220 residues: Glutamine amidotransferase-like class 1 domain-containing protein 1 (220 aa).

An N-terminal signal peptide occupies residues 1–38 (MASERLPNRPACLLVASGAAEGVSAQSFLHCFTMASTA). An N-linked (GlcNAc...) asparagine glycan is attached at asparagine 201.

This sequence belongs to the peptidase C56 family. In terms of assembly, homotetramer. Component of the FERRY complex composed of five subunits, TBCK, PPP1R21, FERRY3, CRYZL1 and GATD1 with a ratio of 1:2:1:2:4, respectively.

The protein localises to the secreted. It localises to the early endosome. Its function is as follows. Component of the FERRY complex (Five-subunit Endosomal Rab5 and RNA/ribosome intermediary). The FERRY complex directly interacts with mRNAs and RAB5A, and functions as a RAB5A effector involved in the localization and the distribution of specific mRNAs most likely by mediating their endosomal transport. The complex recruits mRNAs and ribosomes to early endosomes through direct mRNA-interaction. This Homo sapiens (Human) protein is Glutamine amidotransferase-like class 1 domain-containing protein 1.